A 233-amino-acid chain; its full sequence is MSIGKLHKQAKEKVDRSQVYPIGEALALVKEVAHAKFDETVEISVRLGVDPRKADQMVRGAVVLPNGLGKDVKVLVFAKGEKAIEAKEAGADYVGGDDLVAKIQEGWFDFDTAIATPDMMGTVGKIGRLLGPRGLMPNPKVGTVTFEVGKATSEAKSGKVEYRVEKAGIVHAPVGKVSFDAEKLQENLVALFDALVKAKPATAKGTYFKKMSLSSTMGPGINVDLPTVQALVK.

This sequence belongs to the universal ribosomal protein uL1 family. As to quaternary structure, part of the 50S ribosomal subunit.

Its function is as follows. Binds directly to 23S rRNA. The L1 stalk is quite mobile in the ribosome, and is involved in E site tRNA release. Protein L1 is also a translational repressor protein, it controls the translation of the L11 operon by binding to its mRNA. This Syntrophotalea carbinolica (strain DSM 2380 / NBRC 103641 / GraBd1) (Pelobacter carbinolicus) protein is Large ribosomal subunit protein uL1.